Consider the following 365-residue polypeptide: Probable dual-specificity RNA methyltransferase RlmN (365 aa).

E99 (proton acceptor) is an active-site residue. Residues 105–344 enclose the Radical SAM core domain; it reads QSYGLSVCVT…CVVRQEHGTD (240 aa). C112 and C349 form a disulfide bridge. Residues C119, C123, and C126 each contribute to the [4Fe-4S] cluster site. S-adenosyl-L-methionine-binding positions include 171–172, S203, 227–229, and N305; these read GE and SLH. C349 acts as the S-methylcysteine intermediate in catalysis.

Belongs to the radical SAM superfamily. RlmN family. The cofactor is [4Fe-4S] cluster.

The protein localises to the cytoplasm. It catalyses the reaction adenosine(2503) in 23S rRNA + 2 reduced [2Fe-2S]-[ferredoxin] + 2 S-adenosyl-L-methionine = 2-methyladenosine(2503) in 23S rRNA + 5'-deoxyadenosine + L-methionine + 2 oxidized [2Fe-2S]-[ferredoxin] + S-adenosyl-L-homocysteine. The catalysed reaction is adenosine(37) in tRNA + 2 reduced [2Fe-2S]-[ferredoxin] + 2 S-adenosyl-L-methionine = 2-methyladenosine(37) in tRNA + 5'-deoxyadenosine + L-methionine + 2 oxidized [2Fe-2S]-[ferredoxin] + S-adenosyl-L-homocysteine. In terms of biological role, specifically methylates position 2 of adenine 2503 in 23S rRNA and position 2 of adenine 37 in tRNAs. The protein is Probable dual-specificity RNA methyltransferase RlmN of Lactococcus lactis subsp. cremoris (strain SK11).